Reading from the N-terminus, the 100-residue chain is Integration host factor subunit alpha (100 aa).

It belongs to the bacterial histone-like protein family. As to quaternary structure, heterodimer of an alpha and a beta chain.

This protein is one of the two subunits of integration host factor, a specific DNA-binding protein that functions in genetic recombination as well as in transcriptional and translational control. The sequence is that of Integration host factor subunit alpha from Caulobacter vibrioides (strain ATCC 19089 / CIP 103742 / CB 15) (Caulobacter crescentus).